The chain runs to 201 residues: Retinol-binding protein 4 (201 aa).

Positions 1-18 are cleaved as a signal peptide; that stretch reads MKWVWALLLLAALGSGRA. Disulfide bonds link cysteine 22–cysteine 178, cysteine 88–cysteine 192, and cysteine 138–cysteine 147. Glutamine 116 serves as a coordination point for substrate. Arginine 139 is subject to Omega-N-methylarginine.

It belongs to the calycin superfamily. Lipocalin family. As to quaternary structure, interacts with TTR. Interaction with TTR prevents its loss by filtration through the kidney glomeruli. Interacts with STRA6. As to expression, detected in blood plasma and in urine (at protein level).

The protein localises to the secreted. Functionally, retinol-binding protein that mediates retinol transport in blood plasma. Delivers retinol from the liver stores to the peripheral tissues. Transfers the bound all-trans retinol to STRA6, that then facilitates retinol transport across the cell membrane. The chain is Retinol-binding protein 4 (RBP4) from Homo sapiens (Human).